A 263-amino-acid polypeptide reads, in one-letter code: GTP cyclohydrolase FolE2 (263 aa).

The protein belongs to the GTP cyclohydrolase IV family.

The catalysed reaction is GTP + H2O = 7,8-dihydroneopterin 3'-triphosphate + formate + H(+). It participates in cofactor biosynthesis; 7,8-dihydroneopterin triphosphate biosynthesis; 7,8-dihydroneopterin triphosphate from GTP: step 1/1. Converts GTP to 7,8-dihydroneopterin triphosphate. The polypeptide is GTP cyclohydrolase FolE2 (Nitrosospira multiformis (strain ATCC 25196 / NCIMB 11849 / C 71)).